A 464-amino-acid polypeptide reads, in one-letter code: V-type ATP synthase beta chain (464 aa).

The protein belongs to the ATPase alpha/beta chains family.

Functionally, produces ATP from ADP in the presence of a proton gradient across the membrane. The V-type beta chain is a regulatory subunit. The polypeptide is V-type ATP synthase beta chain (Streptococcus sanguinis (strain SK36)).